The primary structure comprises 348 residues: Methylthioribose-1-phosphate isomerase (348 aa).

Substrate is bound by residues 53 to 55, arginine 93, and glutamine 197; that span reads RGA. The Proton donor role is filled by aspartate 238. 248–249 contacts substrate; the sequence is NK.

This sequence belongs to the eIF-2B alpha/beta/delta subunits family. MtnA subfamily.

The enzyme catalyses 5-(methylsulfanyl)-alpha-D-ribose 1-phosphate = 5-(methylsulfanyl)-D-ribulose 1-phosphate. It participates in amino-acid biosynthesis; L-methionine biosynthesis via salvage pathway; L-methionine from S-methyl-5-thio-alpha-D-ribose 1-phosphate: step 1/6. Catalyzes the interconversion of methylthioribose-1-phosphate (MTR-1-P) into methylthioribulose-1-phosphate (MTRu-1-P). The sequence is that of Methylthioribose-1-phosphate isomerase from Gloeobacter violaceus (strain ATCC 29082 / PCC 7421).